Consider the following 92-residue polypeptide: Ig kappa chain V region 3381 (92 aa).

Residues A1–C23 are framework-1. Residues Q24–A34 are complementarity-determining-1. The interval W35 to Y49 is framework-2. The tract at residues K50–S56 is complementarity-determining-2. The tract at residues G57–C88 is framework-3. Residues Q89–D92 are complementarity-determining-3.

In Oryctolagus cuniculus (Rabbit), this protein is Ig kappa chain V region 3381.